Here is a 384-residue protein sequence, read N- to C-terminus: Probable L-tyrosine/L-aspartate decarboxylase (384 aa).

Lysine 233 carries the N6-(pyridoxal phosphate)lysine modification.

The protein belongs to the group II decarboxylase family. MfnA subfamily. The cofactor is pyridoxal 5'-phosphate.

It catalyses the reaction L-tyrosine + H(+) = tyramine + CO2. The catalysed reaction is L-aspartate + H(+) = beta-alanine + CO2. It participates in cofactor biosynthesis; methanofuran biosynthesis. It functions in the pathway cofactor biosynthesis; coenzyme A biosynthesis. Its function is as follows. Catalyzes the decarboxylation of L-tyrosine to produce tyramine for methanofuran biosynthesis. Can also catalyze the decarboxylation of L-aspartate to produce beta-alanine for coenzyme A (CoA) biosynthesis. This Methanococcus maripaludis (strain C5 / ATCC BAA-1333) protein is Probable L-tyrosine/L-aspartate decarboxylase.